A 509-amino-acid chain; its full sequence is 2-isopropylmalate synthase (509 aa).

In terms of domain architecture, Pyruvate carboxyltransferase spans I5 to K267. Positions 14, 202, 204, and 238 each coordinate Mn(2+). The interval K391–N509 is regulatory domain.

This sequence belongs to the alpha-IPM synthase/homocitrate synthase family. LeuA type 1 subfamily. As to quaternary structure, homodimer. Mn(2+) serves as cofactor.

The protein localises to the cytoplasm. The catalysed reaction is 3-methyl-2-oxobutanoate + acetyl-CoA + H2O = (2S)-2-isopropylmalate + CoA + H(+). It functions in the pathway amino-acid biosynthesis; L-leucine biosynthesis; L-leucine from 3-methyl-2-oxobutanoate: step 1/4. Catalyzes the condensation of the acetyl group of acetyl-CoA with 3-methyl-2-oxobutanoate (2-ketoisovalerate) to form 3-carboxy-3-hydroxy-4-methylpentanoate (2-isopropylmalate). The polypeptide is 2-isopropylmalate synthase (Staphylococcus aureus (strain Mu3 / ATCC 700698)).